The sequence spans 183 residues: Translation initiation factor IF-3 (183 aa).

It belongs to the IF-3 family. As to quaternary structure, monomer.

The protein resides in the cytoplasm. IF-3 binds to the 30S ribosomal subunit and shifts the equilibrium between 70S ribosomes and their 50S and 30S subunits in favor of the free subunits, thus enhancing the availability of 30S subunits on which protein synthesis initiation begins. This is Translation initiation factor IF-3 from Pseudomonas entomophila (strain L48).